A 149-amino-acid chain; its full sequence is Putative inactive group IIC secretory phospholipase A2 (149 aa).

Positions 1-18 are cleaved as a signal peptide; sequence MKVIAILTLLLFCSPTHS. Intrachain disulfides connect Cys44/Cys142, Cys77/Cys107, Cys95/Cys112, and Cys97/Cys105. Ca(2+) is bound by residues Tyr45, Gly47, and Gly49.

This sequence belongs to the phospholipase A2 family. It depends on Ca(2+) as a cofactor.

The protein resides in the secreted. Functionally, inactive phospholipase. This chain is Putative inactive group IIC secretory phospholipase A2 (PLA2G2C), found in Homo sapiens (Human).